Consider the following 283-residue polypeptide: Diaminopimelate epimerase (283 aa).

Residues Asn14, Gln47, and Asn67 each contribute to the substrate site. Residue Cys76 is the Proton donor of the active site. Substrate-binding positions include Gly77 to Asn78, Asn164, Asn197, and Glu215 to Arg216. The Proton acceptor role is filled by Cys224. Gly225–Thr226 lines the substrate pocket.

The protein belongs to the diaminopimelate epimerase family. Homodimer.

Its subcellular location is the cytoplasm. It catalyses the reaction (2S,6S)-2,6-diaminopimelate = meso-2,6-diaminopimelate. It functions in the pathway amino-acid biosynthesis; L-lysine biosynthesis via DAP pathway; DL-2,6-diaminopimelate from LL-2,6-diaminopimelate: step 1/1. Its function is as follows. Catalyzes the stereoinversion of LL-2,6-diaminopimelate (L,L-DAP) to meso-diaminopimelate (meso-DAP), a precursor of L-lysine and an essential component of the bacterial peptidoglycan. This Neisseria meningitidis serogroup A / serotype 4A (strain DSM 15465 / Z2491) protein is Diaminopimelate epimerase.